The chain runs to 220 residues: Ribonuclease HII (220 aa).

The RNase H type-2 domain occupies 16-216 (PVFAGIDEAG…VRPNPAAEEQ (201 aa)). Aspartate 22, glutamate 23, and aspartate 114 together coordinate a divalent metal cation.

The protein belongs to the RNase HII family. Mn(2+) is required as a cofactor. It depends on Mg(2+) as a cofactor.

It is found in the cytoplasm. The catalysed reaction is Endonucleolytic cleavage to 5'-phosphomonoester.. Functionally, endonuclease that specifically degrades the RNA of RNA-DNA hybrids. In Nitratidesulfovibrio vulgaris (strain ATCC 29579 / DSM 644 / CCUG 34227 / NCIMB 8303 / VKM B-1760 / Hildenborough) (Desulfovibrio vulgaris), this protein is Ribonuclease HII.